Consider the following 434-residue polypeptide: Serine hydroxymethyltransferase (434 aa).

Residues leucine 128 and glycine 132 to leucine 134 contribute to the (6S)-5,6,7,8-tetrahydrofolate site. Residue lysine 237 is modified to N6-(pyridoxal phosphate)lysine.

The protein belongs to the SHMT family. As to quaternary structure, homodimer. The cofactor is pyridoxal 5'-phosphate.

It is found in the cytoplasm. It carries out the reaction (6R)-5,10-methylene-5,6,7,8-tetrahydrofolate + glycine + H2O = (6S)-5,6,7,8-tetrahydrofolate + L-serine. It functions in the pathway one-carbon metabolism; tetrahydrofolate interconversion. Its pathway is amino-acid biosynthesis; glycine biosynthesis; glycine from L-serine: step 1/1. In terms of biological role, catalyzes the reversible interconversion of serine and glycine with tetrahydrofolate (THF) serving as the one-carbon carrier. This reaction serves as the major source of one-carbon groups required for the biosynthesis of purines, thymidylate, methionine, and other important biomolecules. Also exhibits THF-independent aldolase activity toward beta-hydroxyamino acids, producing glycine and aldehydes, via a retro-aldol mechanism. The polypeptide is Serine hydroxymethyltransferase (Corynebacterium efficiens (strain DSM 44549 / YS-314 / AJ 12310 / JCM 11189 / NBRC 100395)).